The chain runs to 340 residues: S-adenosylmethionine:tRNA ribosyltransferase-isomerase (340 aa).

Belongs to the QueA family. As to quaternary structure, monomer.

Its subcellular location is the cytoplasm. The catalysed reaction is 7-aminomethyl-7-carbaguanosine(34) in tRNA + S-adenosyl-L-methionine = epoxyqueuosine(34) in tRNA + adenine + L-methionine + 2 H(+). Its pathway is tRNA modification; tRNA-queuosine biosynthesis. Functionally, transfers and isomerizes the ribose moiety from AdoMet to the 7-aminomethyl group of 7-deazaguanine (preQ1-tRNA) to give epoxyqueuosine (oQ-tRNA). This Francisella tularensis subsp. holarctica (strain OSU18) protein is S-adenosylmethionine:tRNA ribosyltransferase-isomerase.